The primary structure comprises 444 residues: Phosphoribosylamine--glycine ligase (444 aa).

Residues 109-324 enclose the ATP-grasp domain; that stretch reads RNLFKKYNIK…FLEVCEAIVN (216 aa). 140–202 lines the ATP pocket; that stretch reads LTEKGIKAVV…EEKLEGVEFT (63 aa). Mg(2+)-binding residues include glutamine 282, glutamate 294, and asparagine 296. Residues glutamine 282, glutamate 294, and asparagine 296 each contribute to the Mn(2+) site.

It belongs to the GARS family. Requires Mg(2+) as cofactor. Mn(2+) is required as a cofactor.

The enzyme catalyses 5-phospho-beta-D-ribosylamine + glycine + ATP = N(1)-(5-phospho-beta-D-ribosyl)glycinamide + ADP + phosphate + H(+). The protein operates within purine metabolism; IMP biosynthesis via de novo pathway; N(1)-(5-phospho-D-ribosyl)glycinamide from 5-phospho-alpha-D-ribose 1-diphosphate: step 2/2. The sequence is that of Phosphoribosylamine--glycine ligase from Methanocaldococcus jannaschii (strain ATCC 43067 / DSM 2661 / JAL-1 / JCM 10045 / NBRC 100440) (Methanococcus jannaschii).